We begin with the raw amino-acid sequence, 432 residues long: Glutamate-1-semialdehyde 2,1-aminomutase (432 aa).

N6-(pyridoxal phosphate)lysine is present on K272.

It belongs to the class-III pyridoxal-phosphate-dependent aminotransferase family. HemL subfamily. In terms of assembly, homodimer. Pyridoxal 5'-phosphate is required as a cofactor.

The protein localises to the cytoplasm. The catalysed reaction is (S)-4-amino-5-oxopentanoate = 5-aminolevulinate. It functions in the pathway porphyrin-containing compound metabolism; protoporphyrin-IX biosynthesis; 5-aminolevulinate from L-glutamyl-tRNA(Glu): step 2/2. Its pathway is porphyrin-containing compound metabolism; chlorophyll biosynthesis. This is Glutamate-1-semialdehyde 2,1-aminomutase from Trichormus variabilis (strain ATCC 29413 / PCC 7937) (Anabaena variabilis).